A 392-amino-acid chain; its full sequence is MENRIEMSQLRASKKDSKISYVLLMATKLYLEGGQPVGSKLLKETYCSDLSSATIRNYFAQLETDGFLRKNHISGGRIPTDLAFRYYADHNAPFLEQEEILAIQQKLTELPEYSKNIVKDLQKASEVLSDILQLPVCFSSPRFESDSVINIQLVAIDDQRVVFVLSTEFGQVFTDVLWLPEQLPENSLKRIEGFLQNYLRKQPSDSLLSQKEKDLGMVLYNEVVVRYLTRYCHFSEEDLYQTGLSRLLKYETFKDPETLAQGLAFFENRKHMCQLLNTYLHKETPTAFIGRELTDIVGNTDPSCAVITIPYYMDRTPLGAFGVLGPMNLPYQQVFGTLSLFTERLKVILTQSFYKFKLSFRRPCPTDPRCSQRPAELTRSSSIKLLPAKELS.

This sequence belongs to the HrcA family.

In terms of biological role, negative regulator of class I heat shock genes (grpE-dnaK-dnaJ and groELS operons). Prevents heat-shock induction of these operons. This Chlamydia trachomatis serovar D (strain ATCC VR-885 / DSM 19411 / UW-3/Cx) protein is Heat-inducible transcription repressor HrcA.